Reading from the N-terminus, the 490-residue chain is Aspartyl/glutamyl-tRNA(Asn/Gln) amidotransferase subunit B (490 aa).

It belongs to the GatB/GatE family. GatB subfamily. As to quaternary structure, heterotrimer of A, B and C subunits.

It catalyses the reaction L-glutamyl-tRNA(Gln) + L-glutamine + ATP + H2O = L-glutaminyl-tRNA(Gln) + L-glutamate + ADP + phosphate + H(+). It carries out the reaction L-aspartyl-tRNA(Asn) + L-glutamine + ATP + H2O = L-asparaginyl-tRNA(Asn) + L-glutamate + ADP + phosphate + 2 H(+). In terms of biological role, allows the formation of correctly charged Asn-tRNA(Asn) or Gln-tRNA(Gln) through the transamidation of misacylated Asp-tRNA(Asn) or Glu-tRNA(Gln) in organisms which lack either or both of asparaginyl-tRNA or glutaminyl-tRNA synthetases. The reaction takes place in the presence of glutamine and ATP through an activated phospho-Asp-tRNA(Asn) or phospho-Glu-tRNA(Gln). In Methylorubrum extorquens (strain CM4 / NCIMB 13688) (Methylobacterium extorquens), this protein is Aspartyl/glutamyl-tRNA(Asn/Gln) amidotransferase subunit B.